Here is a 241-residue protein sequence, read N- to C-terminus: tRNA pseudouridine synthase B (241 aa).

The active-site Nucleophile is the Asp-45.

Belongs to the pseudouridine synthase TruB family. Type 1 subfamily.

It carries out the reaction uridine(55) in tRNA = pseudouridine(55) in tRNA. Its function is as follows. Responsible for synthesis of pseudouridine from uracil-55 in the psi GC loop of transfer RNAs. The sequence is that of tRNA pseudouridine synthase B from Chlamydia trachomatis serovar L2 (strain ATCC VR-902B / DSM 19102 / 434/Bu).